Here is a 549-residue protein sequence, read N- to C-terminus: MKNINPTQTSAWQALQKHFDEMKDVSLADLFAKDGDRFSKFSATFDDQMLVDFSKNRITEETLAKLQDLAKETDLAGAIKSMFSGEKINRTEDRAVLHVALRNRSNTPIMVDGKDVMPEVNAVLEKMKTFSEEIISGSWKGYTGKAITDVVNIGIGGSDLGPFMVTEALRPYKNHLNMHFVSNVDGTHIAEVLKKVNPETTLFLVASKTFTTQETMTNAHSARDWFLATAGDNKHVAKHFAALSTNGKAVGEFGIDTANMFEFWDWVGGRYSLWSAIGLSIILSVGYDNFVELLSGAHAMDKHFANTAPEKNLPVLLALIGIWYNNFFGAETEAILPYDQYMHRFAAYFQQGNMESNGKYVDRNGNAVDYQTGPIIWGEPGTNGQHAFYQLIHQGTKMVPCDFIAPATTHNALSDHHQKLLSNFFAQTEALAFGKARDVVEQEYRDLGKDPATLENVVPFKVFEGNRPTNSILLREITPFSLGALIALYEHKIFTQGAILNIFTFDQWGVELGKQLANRILPELGDDKDINSHDSSTNGLINRYKSWRA.

Glu-355 acts as the Proton donor in catalysis. Residues His-386 and Lys-514 contribute to the active site.

The protein belongs to the GPI family.

Its subcellular location is the cytoplasm. The catalysed reaction is alpha-D-glucose 6-phosphate = beta-D-fructose 6-phosphate. The protein operates within carbohydrate biosynthesis; gluconeogenesis. Its pathway is carbohydrate degradation; glycolysis; D-glyceraldehyde 3-phosphate and glycerone phosphate from D-glucose: step 2/4. Catalyzes the reversible isomerization of glucose-6-phosphate to fructose-6-phosphate. This Enterobacter sp. (strain 638) protein is Glucose-6-phosphate isomerase.